The chain runs to 140 residues: Ribonuclease P protein component (140 aa).

Belongs to the RnpA family. In terms of assembly, consists of a catalytic RNA component (M1 or rnpB) and a protein subunit.

It catalyses the reaction Endonucleolytic cleavage of RNA, removing 5'-extranucleotides from tRNA precursor.. In terms of biological role, RNaseP catalyzes the removal of the 5'-leader sequence from pre-tRNA to produce the mature 5'-terminus. It can also cleave other RNA substrates such as 4.5S RNA. The protein component plays an auxiliary but essential role in vivo by binding to the 5'-leader sequence and broadening the substrate specificity of the ribozyme. This Nostoc punctiforme (strain ATCC 29133 / PCC 73102) protein is Ribonuclease P protein component.